The primary structure comprises 313 residues: Tagatose-6-phosphate kinase (313 aa).

The protein belongs to the carbohydrate kinase PfkB family. LacC subfamily.

It catalyses the reaction D-tagatofuranose 6-phosphate + ATP = D-tagatofuranose 1,6-bisphosphate + ADP + H(+). The protein operates within carbohydrate metabolism; D-tagatose 6-phosphate degradation; D-glyceraldehyde 3-phosphate and glycerone phosphate from D-tagatose 6-phosphate: step 1/2. The sequence is that of Tagatose-6-phosphate kinase from Enterococcus faecalis (strain ATCC 700802 / V583).